The sequence spans 113 residues: Hydrogenase maturation factor HypA (113 aa).

Position 2 (His-2) interacts with Ni(2+). Positions 73, 76, 89, and 92 each coordinate Zn(2+).

It belongs to the HypA/HybF family.

In terms of biological role, involved in the maturation of [NiFe] hydrogenases. Required for nickel insertion into the metal center of the hydrogenase. This Alkalilimnicola ehrlichii (strain ATCC BAA-1101 / DSM 17681 / MLHE-1) protein is Hydrogenase maturation factor HypA.